The primary structure comprises 140 residues: Nucleoside diphosphate kinase (140 aa).

Positions 10, 58, 86, 92, 103, and 113 each coordinate ATP. Catalysis depends on His-116, which acts as the Pros-phosphohistidine intermediate.

It belongs to the NDK family. As to quaternary structure, homotetramer. Mg(2+) serves as cofactor.

The protein localises to the cytoplasm. The catalysed reaction is a 2'-deoxyribonucleoside 5'-diphosphate + ATP = a 2'-deoxyribonucleoside 5'-triphosphate + ADP. It catalyses the reaction a ribonucleoside 5'-diphosphate + ATP = a ribonucleoside 5'-triphosphate + ADP. Its function is as follows. Major role in the synthesis of nucleoside triphosphates other than ATP. The ATP gamma phosphate is transferred to the NDP beta phosphate via a ping-pong mechanism, using a phosphorylated active-site intermediate. The chain is Nucleoside diphosphate kinase from Anaplasma phagocytophilum (strain HZ).